The chain runs to 154 residues: 6,7-dimethyl-8-ribityllumazine synthase (154 aa).

Residues phenylalanine 22, 56–58 (AFE), and 80–82 (AVI) contribute to the 5-amino-6-(D-ribitylamino)uracil site. (2S)-2-hydroxy-3-oxobutyl phosphate is bound at residue 85–86 (AT). The active-site Proton donor is histidine 88. Phenylalanine 113 is a 5-amino-6-(D-ribitylamino)uracil binding site. Arginine 127 contributes to the (2S)-2-hydroxy-3-oxobutyl phosphate binding site.

The protein belongs to the DMRL synthase family.

The enzyme catalyses (2S)-2-hydroxy-3-oxobutyl phosphate + 5-amino-6-(D-ribitylamino)uracil = 6,7-dimethyl-8-(1-D-ribityl)lumazine + phosphate + 2 H2O + H(+). It participates in cofactor biosynthesis; riboflavin biosynthesis; riboflavin from 2-hydroxy-3-oxobutyl phosphate and 5-amino-6-(D-ribitylamino)uracil: step 1/2. Catalyzes the formation of 6,7-dimethyl-8-ribityllumazine by condensation of 5-amino-6-(D-ribitylamino)uracil with 3,4-dihydroxy-2-butanone 4-phosphate. This is the penultimate step in the biosynthesis of riboflavin. This is 6,7-dimethyl-8-ribityllumazine synthase from Agathobacter rectalis (strain ATCC 33656 / DSM 3377 / JCM 17463 / KCTC 5835 / VPI 0990) (Eubacterium rectale).